We begin with the raw amino-acid sequence, 330 residues long: Aspartate--ammonia ligase (330 aa).

It belongs to the class-II aminoacyl-tRNA synthetase family. AsnA subfamily.

Its subcellular location is the cytoplasm. It catalyses the reaction L-aspartate + NH4(+) + ATP = L-asparagine + AMP + diphosphate + H(+). The protein operates within amino-acid biosynthesis; L-asparagine biosynthesis; L-asparagine from L-aspartate (ammonia route): step 1/1. The polypeptide is Aspartate--ammonia ligase (Escherichia coli O81 (strain ED1a)).